The chain runs to 3473 residues: Genome polyprotein (3473 aa).

A coiled-coil region spans residues 514-604 (EVQDALEKSM…RNDIEALKKK (91 aa)). Disordered stretches follow at residues 602-644 (KKKP…SEAQ) and 1278-1306 (YLAD…EGEI). Polar residues-rich tracts occupy residues 607–622 (QSVT…SGTA) and 1278–1295 (YLAD…SIVN). The next 2 helical transmembrane spans lie at 1496 to 1516 (DKWI…LHYY) and 1595 to 1615 (MSSL…GKIP). Positions 1751–1917 (LELMNESYTY…PDVPKNEANP (167 aa)) constitute an SF3 helicase domain. An ATP-binding site is contributed by 1777–1784 (GAPGVGKS). The chain crosses the membrane as a helical span at residues 2363-2383 (ILLAIGASVAVAGVAVGAVIL). Acidic residues predominate over residues 2394 to 2404 (EDEEIEGEEGE). Disordered stretches follow at residues 2394–2415 (EDEE…ESDG) and 2438–2465 (VAEA…LGLS). Basic and acidic residues predominate over residues 2438–2451 (VAEAHEEKDAEKPR). Positions 2632–2850 (GVDRDLSMTN…YAETLTQEHL (219 aa)) constitute a Peptidase C3 domain. Active-site for picornain 3C-like protease activity residues include H2680, E2717, and C2811. Residues 3155–3286 (TKGFAGDYSK…SVHEEFLDVY (132 aa)) form the RdRp catalytic domain.

In terms of processing, specific enzymatic cleavages by picornain 3C-like protease in vivo yield mature proteins. Picornain 3C-like protease is autocatalytically processed.

It localises to the virion. Its subcellular location is the host membrane. It carries out the reaction RNA(n) + a ribonucleoside 5'-triphosphate = RNA(n+1) + diphosphate. Its function is as follows. Picornain 3C-like protease is a thiol protease that probably cleaves the polyprotein. The chain is Genome polyprotein from Oryza sativa (Rice).